The primary structure comprises 371 residues: Loganic acid O-methyltransferase (371 aa).

Residue Tyr-31 participates in S-adenosyl-L-homocysteine binding. Residues Tyr-37 and Gln-38 each coordinate loganate. S-adenosyl-L-homocysteine is bound by residues Cys-78, Asn-83, Asp-114, His-115, Ser-141, and Phe-142. Loganate is bound by residues His-162 and Trp-163. Asn-180 serves as a coordination point for Mg(2+). Ala-241 and His-245 together coordinate loganate. Mg(2+) contacts are provided by Asp-267, Phe-269, and Asn-270. Loganate contacts are provided by Gln-273 and Gln-316.

The protein belongs to the methyltransferase superfamily. Type-7 methyltransferase family. Homodimer. Mg(2+) is required as a cofactor. As to expression, expressed in leaves (especially in leaf epidermis), flowers, siliques and stems, and, at low levels, in hairy roots.

It carries out the reaction loganate + S-adenosyl-L-methionine = loganin + S-adenosyl-L-homocysteine. Its pathway is alkaloid biosynthesis. With respect to regulation, strongly repressed by loganin and slightly by S-adenosyl-L-homocysteine. In terms of biological role, component of the seco-iridoid and derivatives monoterpenoid indole alkaloids (MIAs, e.g. vinblastine and ajmalicine) biosynthesis pathway. Catalyzes the methylation of loganic acid (6S,7R) to produce loganin. Weak activity with secologanic acid as substrate. Inactive on deoxyloganic, dehydrologanic, epiloganic and loganetic acid. This is Loganic acid O-methyltransferase from Catharanthus roseus (Madagascar periwinkle).